A 308-amino-acid chain; its full sequence is Very-long-chain enoyl-CoA reductase (308 aa).

The Cytoplasmic portion of the chain corresponds to 1 to 86; the sequence is MKHYEVEIRD…YFRDLGAQIS (86 aa). Position 22 is an N6-acetyllysine (lysine 22). Serine 58 is modified (phosphoserine). Lysine 60 is subject to N6-acetyllysine. A helical membrane pass occupies residues 87 to 106; the sequence is WVTVFLTEYAGPLFIYLLFY. The Lumenal portion of the chain corresponds to 107–124; sequence FRVPFIYGRKYDFTSSRH. A helical transmembrane segment spans residues 125–147; that stretch reads TVVHLACMCHSFHYIKRLLETLF. Residues 148 to 158 lie on the Cytoplasmic side of the membrane; the sequence is VHRFSHGTMPL. Residues 159–180 form a helical membrane-spanning segment; that stretch reads RNIFKNCTYYWGFAAWMAYYIN. At 181–189 the chain is on the lumenal side; it reads HPLYTPPTY. A helical membrane pass occupies residues 190–216; that stretch reads GVQQVKLALAVFVICQLGNFSIHMALR. Topologically, residues 217–245 are cytoplasmic; that stretch reads DLRPAGSKTRKIPYPTKNPFTWLFLLVSC. A helical membrane pass occupies residues 246–262; sequence PNYTYEVGSWIGFAILT. Over 263–264 the chain is Lumenal; the sequence is QC. A helical membrane pass occupies residues 265 to 292; sequence VPVALFSLVGFTQMTIWAKGKHRSYLKE. The Cytoplasmic portion of the chain corresponds to 293 to 308; it reads FRDYPPLRMPIIPFLL.

Belongs to the steroid 5-alpha reductase family. In terms of assembly, interacts with ELOVL1 and LASS2. Glycosylated.

Its subcellular location is the endoplasmic reticulum membrane. It carries out the reaction a very-long-chain 2,3-saturated fatty acyl-CoA + NADP(+) = a very-long-chain (2E)-enoyl-CoA + NADPH + H(+). The enzyme catalyses octadecanoyl-CoA + NADP(+) = (2E)-octadecenoyl-CoA + NADPH + H(+). The catalysed reaction is (2E,7Z,10Z,13Z,16Z)-docosapentaenoyl-CoA + NADPH + H(+) = (7Z,10Z,13Z,16Z)-docosatetraenoyl-CoA + NADP(+). It catalyses the reaction (2E,7Z,10Z,13Z,16Z,19Z)-docosahexaenoyl-CoA + NADPH + H(+) = (7Z,10Z,13Z,16Z,19Z)-docosapentaenoyl-CoA + NADP(+). It carries out the reaction (2E,8Z,11Z,14Z)-eicosatetraenoyl-CoA + NADPH + H(+) = (8Z,11Z,14Z)-eicosatrienoyl-CoA + NADP(+). The enzyme catalyses (2E)-hexadecenoyl-CoA + NADPH + H(+) = hexadecanoyl-CoA + NADP(+). The protein operates within lipid metabolism; fatty acid biosynthesis. It participates in lipid metabolism; sphingolipid metabolism. Functionally, involved in both the production of very long-chain fatty acids for sphingolipid synthesis and the degradation of the sphingosine moiety in sphingolipids through the sphingosine 1-phosphate metabolic pathway. Catalyzes the last of the four reactions of the long-chain fatty acids elongation cycle. This endoplasmic reticulum-bound enzymatic process, allows the addition of 2 carbons to the chain of long- and very long-chain fatty acids/VLCFAs per cycle. This enzyme reduces the trans-2,3-enoyl-CoA fatty acid intermediate to an acyl-CoA that can be further elongated by entering a new cycle of elongation. Thereby, it participates in the production of VLCFAs of different chain lengths that are involved in multiple biological processes as precursors of membrane lipids and lipid mediators. Catalyzes the saturation step of the sphingosine 1-phosphate metabolic pathway, the conversion of trans-2-hexadecenoyl-CoA to palmitoyl-CoA. The sequence is that of Very-long-chain enoyl-CoA reductase (Tecr) from Mus musculus (Mouse).